We begin with the raw amino-acid sequence, 188 residues long: Quinone reductase (188 aa).

Residues 13-20 (SLRKGSFN), 82-85 (EYNY), and Ser-117 contribute to the FMN site.

It belongs to the SsuE family. As to quaternary structure, homotetramer. Dimer of dimers. The tetrameric configuration has a central role in chromate reductase activity. The cofactor is FMN.

The enzyme catalyses a quinone + NADH + H(+) = a quinol + NAD(+). It catalyses the reaction a quinone + NADPH + H(+) = a quinol + NADP(+). It carries out the reaction Cr(6+) + 2 NADH + O2 = Cr(3+) + superoxide + 2 NAD(+) + 2 H(+). The catalysed reaction is Cr(6+) + 2 NADPH + O2 = Cr(3+) + superoxide + 2 NADP(+) + 2 H(+). Catalyzes the reduction of quinones. Acts by simultaneous two-electron transfer, avoiding formation of highly reactive semiquinone intermediates and producing quinols that promote tolerance of H(2)O(2). Quinone reduction is probably the primary biological role of ChrR. Can also reduce toxic chromate to insoluble and less toxic Cr(3+). Catalyzes the transfer of three electrons to Cr(6+) producing Cr(3+) and one electron to molecular oxygen without producing the toxic Cr(5+) species and only producing a minimal amount of reactive oxygen species (ROS). Chromate reduction protects the cell against chromate toxicity, but is likely a secondary activity. In Escherichia coli O157:H7, this protein is Quinone reductase (chrR).